The chain runs to 295 residues: Indole-3-glycerol phosphate synthase (295 aa).

It belongs to the TrpC family.

The enzyme catalyses 1-(2-carboxyphenylamino)-1-deoxy-D-ribulose 5-phosphate + H(+) = (1S,2R)-1-C-(indol-3-yl)glycerol 3-phosphate + CO2 + H2O. Its pathway is amino-acid biosynthesis; L-tryptophan biosynthesis; L-tryptophan from chorismate: step 4/5. The protein is Indole-3-glycerol phosphate synthase of Prochlorococcus marinus (strain MIT 9301).